We begin with the raw amino-acid sequence, 117 residues long: Immunoglobulin heavy variable 7-4-1 (117 aa).

A signal peptide spans 1–19 (MDWTWRILFLVAAATGAHS). The interval 20-44 (QVQLVQSGSELKKPGASVKVSCKAS) is framework-1. The 98-residue stretch at 20–117 (QVQLVQSGSE…EDTAVYYCAR (98 aa)) folds into the Ig-like domain. Cys41 and Cys115 form a disulfide bridge. The tract at residues 45 to 52 (GYTFTSYA) is complementarity-determining-1. The segment at 53–69 (MNWVRQAPGQGLEWMGW) is framework-2. The segment at 70–77 (INTNTGNP) is complementarity-determining-2. Residues 78 to 115 (TYAQGFTGRFVFSLDTSVSTAYLQICSLKAEDTAVYYC) form a framework-3 region. Residues 116–117 (AR) form a complementarity-determining-3 region.

In terms of assembly, immunoglobulins are composed of two identical heavy chains and two identical light chains; disulfide-linked.

The protein localises to the secreted. The protein resides in the cell membrane. Its function is as follows. V region of the variable domain of immunoglobulin heavy chains that participates in the antigen recognition. Immunoglobulins, also known as antibodies, are membrane-bound or secreted glycoproteins produced by B lymphocytes. In the recognition phase of humoral immunity, the membrane-bound immunoglobulins serve as receptors which, upon binding of a specific antigen, trigger the clonal expansion and differentiation of B lymphocytes into immunoglobulins-secreting plasma cells. Secreted immunoglobulins mediate the effector phase of humoral immunity, which results in the elimination of bound antigens. The antigen binding site is formed by the variable domain of one heavy chain, together with that of its associated light chain. Thus, each immunoglobulin has two antigen binding sites with remarkable affinity for a particular antigen. The variable domains are assembled by a process called V-(D)-J rearrangement and can then be subjected to somatic hypermutations which, after exposure to antigen and selection, allow affinity maturation for a particular antigen. The protein is Immunoglobulin heavy variable 7-4-1 of Homo sapiens (Human).